The following is a 207-amino-acid chain: Low-molecular weight cobalt-containing nitrile hydratase subunit alpha (207 aa).

4 residues coordinate Co(3+): cysteine 109, cysteine 112, serine 113, and cysteine 114.

The protein belongs to the nitrile hydratase subunit alpha family. In terms of assembly, heterodimer of an alpha and a beta chain. Co(3+) is required as a cofactor.

The enzyme catalyses an aliphatic primary amide = an aliphatic nitrile + H2O. Its function is as follows. NHase catalyzes the hydration of various nitrile compounds to the corresponding amides. In Rhodococcus rhodochrous, this protein is Low-molecular weight cobalt-containing nitrile hydratase subunit alpha.